The following is a 147-amino-acid chain: Lipoprotein signal peptidase (147 aa).

4 helical membrane passes run 10–30 (ISIFLILLIDQITKYLAIKFL), 34–54 (GIVKLLPFLNLVYVENTGTAF), 59–79 (FLGSGFFIIIALVVTGFLVYM), and 87–107 (WFIYSLIIAGALGNIIDRLIY). Active-site residues include Asp112 and Asp130. Residues 121–141 (LHWPAFNVADSAISIGIVLFV) traverse the membrane as a helical segment.

It belongs to the peptidase A8 family.

The protein localises to the cell inner membrane. The catalysed reaction is Release of signal peptides from bacterial membrane prolipoproteins. Hydrolyzes -Xaa-Yaa-Zaa-|-(S,diacylglyceryl)Cys-, in which Xaa is hydrophobic (preferably Leu), and Yaa (Ala or Ser) and Zaa (Gly or Ala) have small, neutral side chains.. It participates in protein modification; lipoprotein biosynthesis (signal peptide cleavage). This protein specifically catalyzes the removal of signal peptides from prolipoproteins. This Thermodesulfovibrio yellowstonii (strain ATCC 51303 / DSM 11347 / YP87) protein is Lipoprotein signal peptidase.